The chain runs to 716 residues: Fatty acid oxidation complex subunit alpha (716 aa).

Residues 1-189 (MIYQSPTIQV…KVGAVDAVVA (189 aa)) form an enoyl-CoA hydratase/isomerase region. A substrate-binding site is contributed by aspartate 296. Residues 311–716 (KEVNNAAVLG…AANNGSYYQA (406 aa)) are 3-hydroxyacyl-CoA dehydrogenase. NAD(+) contacts are provided by residues methionine 324, aspartate 343, 400 to 402 (VVE), lysine 407, and serine 429. Histidine 450 acts as the For 3-hydroxyacyl-CoA dehydrogenase activity in catalysis. Asparagine 453 provides a ligand contact to NAD(+). Residues asparagine 500 and tyrosine 660 each coordinate substrate.

This sequence in the N-terminal section; belongs to the enoyl-CoA hydratase/isomerase family. In the C-terminal section; belongs to the 3-hydroxyacyl-CoA dehydrogenase family. As to quaternary structure, heterotetramer of two alpha chains (FadB) and two beta chains (FadA).

The catalysed reaction is a (3S)-3-hydroxyacyl-CoA + NAD(+) = a 3-oxoacyl-CoA + NADH + H(+). The enzyme catalyses a (3S)-3-hydroxyacyl-CoA = a (2E)-enoyl-CoA + H2O. It carries out the reaction a 4-saturated-(3S)-3-hydroxyacyl-CoA = a (3E)-enoyl-CoA + H2O. It catalyses the reaction (3S)-3-hydroxybutanoyl-CoA = (3R)-3-hydroxybutanoyl-CoA. The catalysed reaction is a (3Z)-enoyl-CoA = a 4-saturated (2E)-enoyl-CoA. The enzyme catalyses a (3E)-enoyl-CoA = a 4-saturated (2E)-enoyl-CoA. Its pathway is lipid metabolism; fatty acid beta-oxidation. Involved in the aerobic and anaerobic degradation of long-chain fatty acids via beta-oxidation cycle. Catalyzes the formation of 3-oxoacyl-CoA from enoyl-CoA via L-3-hydroxyacyl-CoA. It can also use D-3-hydroxyacyl-CoA and cis-3-enoyl-CoA as substrate. This Shewanella baltica (strain OS223) protein is Fatty acid oxidation complex subunit alpha.